The primary structure comprises 148 residues: Hemoglobin subunit beta-A (148 aa).

A Globin domain is found at aspartate 3–histidine 148. Heme b is bound by residues histidine 64 and histidine 93.

Belongs to the globin family. In terms of assembly, heterotetramer of two alpha chains and two beta chains. As to expression, red blood cells.

In terms of biological role, involved in oxygen transport from gills to the various peripheral tissues. In Seriola quinqueradiata (Five-ray yellowtail), this protein is Hemoglobin subunit beta-A (hbb1).